A 365-amino-acid chain; its full sequence is Isopentenyl-diphosphate delta-isomerase (365 aa).

8 to 9 is a binding site for substrate; the sequence is RK. Residues 67 to 69, Ser97, and Asn126 each bind FMN; that span reads SIT. 97 to 99 contacts substrate; sequence SQR. Substrate is bound at residue Gln160. Residue Glu161 participates in Mg(2+) binding. FMN contacts are provided by residues Lys192, Thr222, 272 to 274, and 293 to 294; these read GVR and AL.

It belongs to the IPP isomerase type 2 family. In terms of assembly, homooctamer. Dimer of tetramers. The cofactor is FMN. NADPH serves as cofactor. Requires Mg(2+) as cofactor.

Its subcellular location is the cytoplasm. It catalyses the reaction isopentenyl diphosphate = dimethylallyl diphosphate. Functionally, involved in the biosynthesis of isoprenoids. Catalyzes the 1,3-allylic rearrangement of the homoallylic substrate isopentenyl (IPP) to its allylic isomer, dimethylallyl diphosphate (DMAPP). This Methanosarcina acetivorans (strain ATCC 35395 / DSM 2834 / JCM 12185 / C2A) protein is Isopentenyl-diphosphate delta-isomerase.